A 201-amino-acid polypeptide reads, in one-letter code: MPKEFKQHTGIAVPLDASNVDTDAIIPKQFLQKVTRIGFGQHLFHEWRFLDDEGKQPNPDFVLNYPRYQGASILLARENFGCGSSREHAPWALDDYGIRVIIAPSFADIFYGNSLNNQMLPIRLSDEEVEELFQFVNANEGATITVDLETQRVSANNKVYSFEIDPFRRHCLLNGLDNIGLTLQHEAKIAEYESNIPAFLR.

The protein belongs to the LeuD family. LeuD type 1 subfamily. In terms of assembly, heterodimer of LeuC and LeuD.

The enzyme catalyses (2R,3S)-3-isopropylmalate = (2S)-2-isopropylmalate. Its pathway is amino-acid biosynthesis; L-leucine biosynthesis; L-leucine from 3-methyl-2-oxobutanoate: step 2/4. Functionally, catalyzes the isomerization between 2-isopropylmalate and 3-isopropylmalate, via the formation of 2-isopropylmaleate. In Pasteurella multocida (strain Pm70), this protein is 3-isopropylmalate dehydratase small subunit.